Reading from the N-terminus, the 319-residue chain is Acetyl-coenzyme A carboxylase carboxyl transferase subunit alpha (319 aa).

The CoA carboxyltransferase C-terminal domain maps to 38-292 (ALDKKAADLL…GKAIASMLAG (255 aa)).

The protein belongs to the AccA family. Acetyl-CoA carboxylase is a heterohexamer composed of biotin carboxyl carrier protein (AccB), biotin carboxylase (AccC) and two subunits each of ACCase subunit alpha (AccA) and ACCase subunit beta (AccD).

It is found in the cytoplasm. The catalysed reaction is N(6)-carboxybiotinyl-L-lysyl-[protein] + acetyl-CoA = N(6)-biotinyl-L-lysyl-[protein] + malonyl-CoA. It participates in lipid metabolism; malonyl-CoA biosynthesis; malonyl-CoA from acetyl-CoA: step 1/1. Component of the acetyl coenzyme A carboxylase (ACC) complex. First, biotin carboxylase catalyzes the carboxylation of biotin on its carrier protein (BCCP) and then the CO(2) group is transferred by the carboxyltransferase to acetyl-CoA to form malonyl-CoA. In Jannaschia sp. (strain CCS1), this protein is Acetyl-coenzyme A carboxylase carboxyl transferase subunit alpha.